The sequence spans 275 residues: uncharacterized protein (275 aa).

The next 3 membrane-spanning stretches (helical) occupy residues 15-35 (LFLP…FLGS), 39-59 (AIMI…FGLF), and 70-90 (ILYL…VVYL). The disordered stretch occupies residues 140 to 191 (SSKTDMDSQVAEAPQTEEGEPSVNQVPQEAGASHRVGPYQDQGLATDRNGNP).

The protein localises to the mitochondrion membrane. This is an uncharacterized protein from Arabidopsis thaliana (Mouse-ear cress).